We begin with the raw amino-acid sequence, 129 residues long: Follitropin subunit beta (129 aa).

Residues 1–20 (MKTVQFCFLFCCWKAICCNS) form the signal peptide. 6 disulfides stabilise this stretch: cysteine 21/cysteine 69, cysteine 35/cysteine 84, cysteine 38/cysteine 122, cysteine 46/cysteine 100, cysteine 50/cysteine 102, and cysteine 105/cysteine 112. Residues asparagine 25 and asparagine 42 are each glycosylated (N-linked (GlcNAc...) asparagine).

This sequence belongs to the glycoprotein hormones subunit beta family. As to quaternary structure, heterodimer. The active follitropin is a heterodimer composed of an alpha chain/CGA shared with other hormones and a unique beta chain/FSHB shown here.

The protein resides in the secreted. Its function is as follows. Together with the alpha chain CGA constitutes follitropin, the follicle-stimulating hormone, and provides its biological specificity to the hormone heterodimer. Binds FSHR, a G protein-coupled receptor, on target cells to activate downstream signaling pathways. Follitropin is involved in follicle development and spermatogenesis in reproductive organs. The protein is Follitropin subunit beta (FSHB) of Aotus nancymaae (Ma's night monkey).